Here is a 343-residue protein sequence, read N- to C-terminus: NADH-cytochrome b5 reductase 2 (343 aa).

A helical membrane pass occupies residues 41-61 (ILLGAAAVGLAGAGAYFFSGA). An FAD-binding FR-type domain is found at 92–197 (QGWLSLKLEE…KGPLPKYPWE (106 aa)). Residue 200-235 (KHKHIALVAGGTGITPMYQLIRAIFNNPDDKTKVTL) participates in FAD binding.

The protein belongs to the flavoprotein pyridine nucleotide cytochrome reductase family. FAD serves as cofactor.

It localises to the mitochondrion outer membrane. The enzyme catalyses 2 Fe(III)-[cytochrome b5] + NADH = 2 Fe(II)-[cytochrome b5] + NAD(+) + H(+). Functionally, may mediate the reduction of outer membrane cytochrome b5. In Neurospora crassa (strain ATCC 24698 / 74-OR23-1A / CBS 708.71 / DSM 1257 / FGSC 987), this protein is NADH-cytochrome b5 reductase 2 (mcr-1).